The chain runs to 251 residues: GTP cyclohydrolase 1 type 2 homolog (251 aa).

Residues His64, His65, Asp102, His219, and Glu223 each coordinate a divalent metal cation.

This sequence belongs to the GTP cyclohydrolase I type 2/NIF3 family. In terms of assembly, homohexamer.

The polypeptide is GTP cyclohydrolase 1 type 2 homolog (Chlamydia muridarum (strain MoPn / Nigg)).